A 555-amino-acid chain; its full sequence is Glucose-6-phosphate isomerase (555 aa).

Catalysis depends on glutamate 365, which acts as the Proton donor. Catalysis depends on residues histidine 396 and lysine 522.

The protein belongs to the GPI family.

The protein localises to the cytoplasm. The enzyme catalyses alpha-D-glucose 6-phosphate = beta-D-fructose 6-phosphate. The protein operates within carbohydrate biosynthesis; gluconeogenesis. It functions in the pathway carbohydrate degradation; glycolysis; D-glyceraldehyde 3-phosphate and glycerone phosphate from D-glucose: step 2/4. Functionally, catalyzes the reversible isomerization of glucose-6-phosphate to fructose-6-phosphate. This is Glucose-6-phosphate isomerase from Psychrobacter cryohalolentis (strain ATCC BAA-1226 / DSM 17306 / VKM B-2378 / K5).